The chain runs to 207 residues: Casparian strip membrane protein 1 (207 aa).

The span at 1 to 12 (MEADSTTINVTE) shows a compositional bias: polar residues. A disordered region spans residues 1–20 (MEADSTTINVTETPKERKGK). Residues 1-48 (MEADSTTINVTETPKERKGKAPLLAAPPASSGVKRVLQKAPKGGYKRG) are Cytoplasmic-facing. Residues 49–69 (LAVFDVVLRLAGIATALGAAI) traverse the membrane as a helical segment. At 70–98 (AMGSTDQTLPFFTQFFQFKAEFDDLPAFT) the chain is on the extracellular side. A helical membrane pass occupies residues 99–119 (FFVIANAITAAYLALTIPISI). Over 120 to 131 (VCIIRPHLVAPR) the chain is Cytoplasmic. Residues 132–152 (VLLIFLDTVMVALTTAAAGGT) form a helical membrane-spanning segment. Topologically, residues 153 to 184 (ASIVYLAHNGNSDANWPAICQQFNDXCQKVSG) are extracellular. Residues 185–205 (AVVASFLTVVVLMLLIVLSAF) traverse the membrane as a helical segment. The Cytoplasmic segment spans residues 206-207 (AL).

Belongs to the Casparian strip membrane proteins (CASP) family. In terms of assembly, homodimer and heterodimers.

The protein resides in the cell membrane. Functionally, regulates membrane-cell wall junctions and localized cell wall deposition. Required for establishment of the Casparian strip membrane domain (CSD) and the subsequent formation of Casparian strips, a cell wall modification of the root endodermis that determines an apoplastic barrier between the intraorganismal apoplasm and the extraorganismal apoplasm and prevents lateral diffusion. This Cynara cardunculus var. scolymus (Globe artichoke) protein is Casparian strip membrane protein 1.